Consider the following 118-residue polypeptide: Large ribosomal subunit protein bL19 (118 aa).

It belongs to the bacterial ribosomal protein bL19 family.

Functionally, this protein is located at the 30S-50S ribosomal subunit interface and may play a role in the structure and function of the aminoacyl-tRNA binding site. The chain is Large ribosomal subunit protein bL19 from Campylobacter hominis (strain ATCC BAA-381 / DSM 21671 / CCUG 45161 / LMG 19568 / NCTC 13146 / CH001A).